The chain runs to 151 residues: Cell division protein SepF (151 aa).

The protein belongs to the SepF family. In terms of assembly, homodimer. Interacts with FtsZ.

The protein resides in the cytoplasm. Cell division protein that is part of the divisome complex and is recruited early to the Z-ring. Probably stimulates Z-ring formation, perhaps through the cross-linking of FtsZ protofilaments. Its function overlaps with FtsA. This chain is Cell division protein SepF, found in Desulfitobacterium hafniense (strain Y51).